We begin with the raw amino-acid sequence, 251 residues long: Pyrroloquinoline-quinone synthase (251 aa).

It belongs to the PqqC family.

The enzyme catalyses 6-(2-amino-2-carboxyethyl)-7,8-dioxo-1,2,3,4,7,8-hexahydroquinoline-2,4-dicarboxylate + 3 O2 = pyrroloquinoline quinone + 2 H2O2 + 2 H2O + H(+). It functions in the pathway cofactor biosynthesis; pyrroloquinoline quinone biosynthesis. Its function is as follows. Ring cyclization and eight-electron oxidation of 3a-(2-amino-2-carboxyethyl)-4,5-dioxo-4,5,6,7,8,9-hexahydroquinoline-7,9-dicarboxylic-acid to PQQ. In Pseudomonas syringae pv. tomato (strain ATCC BAA-871 / DC3000), this protein is Pyrroloquinoline-quinone synthase.